The sequence spans 95 residues: Large ribosomal subunit protein uL24c (95 aa).

It belongs to the universal ribosomal protein uL24 family. In terms of assembly, part of the 50S ribosomal subunit.

The protein localises to the plastid. It is found in the chloroplast. One of two assembly initiator proteins, it binds directly to the 5'-end of the 23S rRNA, where it nucleates assembly of the 50S subunit. The chain is Large ribosomal subunit protein uL24c (rpl24) from Porphyra purpurea (Red seaweed).